The sequence spans 141 residues: Large ribosomal subunit protein uL13 (141 aa).

The protein belongs to the universal ribosomal protein uL13 family. In terms of assembly, part of the 50S ribosomal subunit.

Its function is as follows. This protein is one of the early assembly proteins of the 50S ribosomal subunit, although it is not seen to bind rRNA by itself. It is important during the early stages of 50S assembly. In Deinococcus deserti (strain DSM 17065 / CIP 109153 / LMG 22923 / VCD115), this protein is Large ribosomal subunit protein uL13.